The following is a 189-amino-acid chain: Movement protein (189 aa).

This sequence belongs to the tombusvirus/aureusvirus movement protein p22 family. In terms of assembly, interacts with host protein HFI22. Phosphorylated.

It localises to the host membrane. Transports viral genome to neighboring plant cells directly through plasmosdesmata, without any budding. The movement protein allows efficient cell to cell propagation, by bypassing the host cell wall barrier. Displays RNA-binding activity. The polypeptide is Movement protein (Capsicum annuum (Capsicum pepper)).